A 669-amino-acid polypeptide reads, in one-letter code: GTP-binding protein 1 (669 aa).

The interval 1–32 (MATERSRSAMDSPVPASMFAPEPSSPGAARAA) is disordered. Phosphoserine is present on residues serine 6, serine 8, serine 12, serine 24, serine 25, serine 44, serine 47, and serine 69. One can recognise a tr-type G domain in the interval 158–389 (FLEVRVAVVG…LNLLSPRTSY (232 aa)). Positions 167-174 (GNVDAGKS) are G1. 167–174 (GNVDAGKS) provides a ligand contact to GTP. Residues 206 to 210 (GRTSS) are G2. The segment at 252–255 (DLAG) is G3. GTP contacts are provided by residues 252-256 (DLAGH) and 308-311 (TKID). A G4 region spans residues 308–311 (TKID). Residues 366–368 (SNV) are G5. Residues 573-595 (LLQTTNNSPMNSKPQQIKMQSTK) are compositionally biased toward polar residues. The segment at 573 to 669 (LLQTTNNSPM…GACVTPASGC (97 aa)) is disordered. Serine 580 bears the Phosphoserine mark. Positions 646–657 (GRRRGGQRHKVK) are enriched in basic residues.

This sequence belongs to the TRAFAC class translation factor GTPase superfamily. Classic translation factor GTPase family. GTPBP1 subfamily. In terms of assembly, interacts with EXOSC2/RRP4, EXOSC3/RRP40, EXOSC5/RRP46, HNRNPD, HNRNPR and SYNCRIP. Identified in a complex with AANAT mRNA, but does not bind mRNA by itself.

The protein resides in the cytoplasm. In terms of biological role, promotes degradation of target mRNA species. Plays a role in the regulation of circadian mRNA stability. Binds GTP and has GTPase activity. In Homo sapiens (Human), this protein is GTP-binding protein 1 (GTPBP1).